Here is a 143-residue protein sequence, read N- to C-terminus: Transcriptional regulator MraZ (143 aa).

SpoVT-AbrB domains lie at 5 to 47 (THTP…PRAE) and 76 to 119 (TDEQ…DAQA).

The protein belongs to the MraZ family. In terms of assembly, forms oligomers.

The protein localises to the cytoplasm. It localises to the nucleoid. The sequence is that of Transcriptional regulator MraZ from Mycobacterium leprae (strain Br4923).